A 116-amino-acid chain; its full sequence is Anti-sigma F factor antagonist (116 aa).

The STAS domain occupies 3–113; sequence LAIDLEVKQD…ADEQFALQAL (111 aa). Phosphoserine is present on Ser-58.

Belongs to the anti-sigma-factor antagonist family. Post-translationally, phosphorylated by SpoIIAB on a serine residue.

In the phosphorylated form it could act as an anti-anti-sigma factor that counteracts SpoIIAB and thus releases sigma f from inhibition. This is Anti-sigma F factor antagonist (spoIIAA) from Geobacillus stearothermophilus (Bacillus stearothermophilus).